Here is a 365-residue protein sequence, read N- to C-terminus: MKRQLILEDGTVLIGTGFGGEIEKSGEVVFTTGMTGYQETLSDPSYCGQIVTFTYPLIGNYGINRDDFESIHPSVNGLIVNEICDHPSNFRNEISLNDYLKERNIPGLAGIDTRKLTRKIRQYGTLRGRLCNMDADVEYIVSQLKATVFTDHVKRVSTKDPYPSPGRGHRVVLVDFGMKHGILRELNKRDCDVIVVPYNTTAEEILRLSPDGIMLSNGPGDPKDVPEAIEMLKDIIGKVPLFGICLGHQLFALASGANTSKLKFGHRGLNHPVKNLATGKVAITSQNHGYAVEEESVENTELEITHVALNDGTVEGLRHKKFPAFTVQYHPEASAGPEDANDLFEDFLTMIENFKKEGEELCQNA.

CPSase stretches follow at residues 1 to 166 (MKRQ…PSPG) and 1 to 169 (MKRQ…GRGH). Residues Ser45, Gly218, and Gly220 each coordinate L-glutamine. One can recognise a Glutamine amidotransferase type-1 domain in the interval 170–357 (RVVLVDFGMK…LTMIENFKKE (188 aa)). Cys245 acts as the Nucleophile in catalysis. Positions 246, 249, 287, 289, and 290 each coordinate L-glutamine. Residues His330 and Glu332 contribute to the active site.

This sequence belongs to the CarA family. Composed of two chains; the small (or glutamine) chain promotes the hydrolysis of glutamine to ammonia, which is used by the large (or ammonia) chain to synthesize carbamoyl phosphate. Tetramer of heterodimers (alpha,beta)4.

It catalyses the reaction hydrogencarbonate + L-glutamine + 2 ATP + H2O = carbamoyl phosphate + L-glutamate + 2 ADP + phosphate + 2 H(+). The enzyme catalyses L-glutamine + H2O = L-glutamate + NH4(+). Its pathway is amino-acid biosynthesis; L-arginine biosynthesis; carbamoyl phosphate from bicarbonate: step 1/1. It functions in the pathway pyrimidine metabolism; UMP biosynthesis via de novo pathway; (S)-dihydroorotate from bicarbonate: step 1/3. Small subunit of the glutamine-dependent carbamoyl phosphate synthetase (CPSase). CPSase catalyzes the formation of carbamoyl phosphate from the ammonia moiety of glutamine, carbonate, and phosphate donated by ATP, constituting the first step of 2 biosynthetic pathways, one leading to arginine and/or urea and the other to pyrimidine nucleotides. The small subunit (glutamine amidotransferase) binds and cleaves glutamine to supply the large subunit with the substrate ammonia. The chain is Carbamoyl phosphate synthase small chain from Bacillus cereus (strain ATCC 10987 / NRS 248).